Here is a 177-residue protein sequence, read N- to C-terminus: Large ribosomal subunit protein uL6 (177 aa).

The protein belongs to the universal ribosomal protein uL6 family. As to quaternary structure, part of the 50S ribosomal subunit.

In terms of biological role, this protein binds to the 23S rRNA, and is important in its secondary structure. It is located near the subunit interface in the base of the L7/L12 stalk, and near the tRNA binding site of the peptidyltransferase center. The polypeptide is Large ribosomal subunit protein uL6 (Pseudomonas syringae pv. syringae (strain B728a)).